A 658-amino-acid chain; its full sequence is MQLKNFYPKMSVLGIATVMALTACGDENTQALFANNPVPGAENQVPVSSSDMSPTSSDAVIDPTSSSAAVVDPSTLPAEGPITMPEGLGTLVDDFEDGDNLSKIGDYWYTYNDNDNGGASIITTPLNEEENIIPGRVNNGSNYALQVNYTLDRGDYEYDPYVGWGVQVAPDEANGHFGGLTYWYKGGAHEVHIEITDVEDYDVHLAKFPASRTWKQAVVRFKDLVQGGWGKEIPFDAKHIMAISFQAKGNKSKLVTDSLFIDNIYLQDSSEVEKDQPDMEIKDPVIPVVEFTEAEITVTNPLQEKAMKYLNKGVNFTNWLENADGKFKSFELGESDVKILADNGFKSLRLPIDLDLYATNRDAFIAGTDTELKFDDDTLFLVLDSFVEWTAKYNMSFVIDYHEYDNSYNTTSAKDPNYIKMMAETWKHVAAHYAESPREDLFFELLNEPDMSDGKVTAATWTTAAQAMIDAIRTVDTKHTILFGDAQWYSITLLAKRTPFTDDNIIYVIHTYEPFAFTHQGGSWTDYATIHDIPFPYDPAKWSTVSGDFGVNKSTKSYVKTNIKNYYKTGSKEAILEQILKAKKWAATNNVPVIINEFGALNLRSTAESRLNYLTAMREICDTLQIPWTHWGYTGNFSVIENGKLIEGLDKALGVGSK.

Positions 1–23 are cleaved as a signal peptide; sequence MQLKNFYPKMSVLGIATVMALTA. Residue Cys-24 is the site of N-palmitoyl cysteine attachment. Cys-24 carries the S-diacylglycerol cysteine lipid modification. Positions 24–265 are excised as a propeptide; sequence CGDENTQALF…TDSLFIDNIY (242 aa). Positions 42 to 83 are disordered; the sequence is ENQVPVSSSDMSPTSSDAVIDPTSSSAAVVDPSTLPAEGPIT. Positions 45–58 are enriched in low complexity; the sequence is VPVSSSDMSPTSSD. The CBM11 domain occupies 87–277; it reads GLGTLVDDFE…DSSEVEKDQP (191 aa). Glu-448 acts as the Proton donor in catalysis. The active-site Nucleophile is the Glu-597.

The protein belongs to the glycosyl hydrolase 5 (cellulase A) family. As to quaternary structure, monomer. In terms of processing, may be a lipoprotein and may be glycosylated.

It localises to the membrane. The catalysed reaction is Endohydrolysis of (1-&gt;4)-beta-D-glucosidic linkages in cellulose, lichenin and cereal beta-D-glucans.. Exhibits both endoglucanase and cellobiosidase activities. In Fibrobacter succinogenes (strain ATCC 19169 / S85), this protein is Endoglucanase 3 (cel-3).